A 348-amino-acid chain; its full sequence is Ion-translocating oxidoreductase complex subunit D (348 aa).

Topologically, residues 1 to 22 (MAFFIASSPHLRSKRSTADVMR) are cytoplasmic. The next 2 membrane-spanning stretches (helical) occupy residues 23–43 (WVLV…GYGT) and 44–64 (LIQL…IMLL). Residues 65-71 (RKRSPIS) are Cytoplasmic-facing. Residues 72–91 (ALRDYSAVVTAWLLAVAIPP) traverse the membrane as a helical segment. At 92-94 (LSP) the chain is on the periplasmic side. The helical transmembrane segment at 95-117 (WWVVVIGLIFAIVIAKHLYGGLG) threads the bilayer. At 118-125 (QNPFNPAM) the chain is on the cytoplasmic side. A helical membrane pass occupies residues 126–146 (IAYVVLLISFPVQMTSWMAPI). Topologically, residues 147–213 (KLTAEPSSLV…ETLTQPQFSG (67 aa)) are periplasmic. Thr-187 bears the FMN phosphoryl threonine mark. A helical membrane pass occupies residues 214–234 (FAGIGWEWVNIAYLLGGLILL). Over 235-242 (KLRIIRWH) the chain is Cytoplasmic. A helical membrane pass occupies residues 243 to 263 (IPVAMLAGLVFTALLAQLFAP). Residues 264–265 (GT) are Periplasmic-facing. A helical membrane pass occupies residues 266–286 (TASPMIHLLSGATMLGAFFIA). The Cytoplasmic segment spans residues 287–299 (TDPVSASTTDKGR). 2 helical membrane passes run 300–320 (LIYG…GGFP) and 321–341 (DGVA…DYYT). At 342-348 (KPRTYGH) the chain is on the cytoplasmic side.

The protein belongs to the NqrB/RnfD family. The complex is composed of six subunits: RnfA, RnfB, RnfC, RnfD, RnfE and RnfG. FMN serves as cofactor.

Its subcellular location is the cell inner membrane. Its function is as follows. Part of a membrane-bound complex that couples electron transfer with translocation of ions across the membrane. The polypeptide is Ion-translocating oxidoreductase complex subunit D (Vibrio cholerae serotype O1 (strain ATCC 39541 / Classical Ogawa 395 / O395)).